Here is a 430-residue protein sequence, read N- to C-terminus: Putrescine 2-hydroxylase (430 aa).

Residues 88-203 (LYVGHQKLVP…LRDCHGLLFE (116 aa)) form the Rieske domain. C128, H130, C162, and H165 together coordinate [2Fe-2S] cluster.

The protein belongs to the bacterial ring-hydroxylating dioxygenase alpha subunit family. Requires [2Fe-2S] cluster as cofactor.

Rieske-type iron sulfur protein that can catalyze in vitro the 2-hydroxylation of putrescine, forming 2-hydroxyputrescine. May be involved in the biosynthesis of the cyclic hydroxamate siderophore alcaligin. In Bordetella bronchiseptica (strain ATCC BAA-588 / NCTC 13252 / RB50) (Alcaligenes bronchisepticus), this protein is Putrescine 2-hydroxylase.